The following is a 383-amino-acid chain: Sphingosine kinase 1 (383 aa).

A DAGKc domain is found at 12–159; sequence PRPCRVLVLL…MNLLSLHTAS (148 aa). Residues 22–24 and 54–58 contribute to the ATP site; these read NPR and TERQN. A substrate-binding site is contributed by 79–82; sequence SGDG. Asp-81 (proton donor/acceptor) is an active-site residue. ATP is bound by residues Glu-86 and 111–113; that span reads GSG. 2 short sequence motifs (nuclear export signal) span residues 147 to 155 and 161 to 169; these read LSPMNLLSL and RQLYSVLSL. Position 178 (Asp-178) interacts with substrate. Positions 185 and 191 each coordinate ATP. Phosphothreonine is present on Thr-193. Ser-225 is modified (phosphoserine). 340 to 342 is an ATP binding site; the sequence is DGE. The interval 363 to 383 is disordered; that stretch reads GSSDSPSGRDSQRRPPPEEPI. The span at 372–383 shows a compositional bias: basic and acidic residues; it reads DSQRRPPPEEPI.

As to quaternary structure, interacts with ACY1. Binds to calmodulin. Interacts with SPHKAP. Interacts with CIB1, the interaction occurs in a calcium-dependent manner. Interacts with TRAF2. Interacts with EEF1A1; the interaction enhances SPHK1 kinase activity. The cofactor is Mg(2+). Expressed in microglia (at protein level).

The protein localises to the cytoplasm. The protein resides in the nucleus. Its subcellular location is the cell membrane. It localises to the endosome membrane. It is found in the membrane. The protein localises to the clathrin-coated pit. The protein resides in the synapse. It catalyses the reaction a sphingoid base + ATP = a sphingoid 1-phosphate + ADP + H(+). It carries out the reaction L-seryl-[protein] + acetyl-CoA = O-acetyl-L-seryl-[protein] + CoA. The enzyme catalyses sphinganine + ATP = sphinganine 1-phosphate + ADP + H(+). The catalysed reaction is sphing-4-enine + ATP = sphing-4-enine 1-phosphate + ADP + H(+). It catalyses the reaction 1-O-hexadecyl-2-amino-sn-glycerol + ATP = 1-O-hexadecyl-2-desoxy-2-amino-sn-glycero-3-phosphate + ADP + H(+). With respect to regulation, acetyltransferase activity increases in presence of the kinase substrate, sphingosine. In Purkinje cells, kinase activity on sphingosine increases in presence of VEGFA. In neurons, kinase activity increases during the first 24h in presence of Amyloid-beta protein 42 to decrease after 96h. In terms of biological role, catalyzes the phosphorylation of sphingosine to form sphingosine 1-phosphate (SPP), a lipid mediator with both intra- and extracellular functions. Also acts on D-erythro-sphingosine and to a lesser extent sphinganine, but not other lipids, such as D,L-threo-dihydrosphingosine, N,N-dimethylsphingosine, diacylglycerol, ceramide, or phosphatidylinositol. In contrast to proapoptotic SPHK2, has a negative effect on intracellular ceramide levels, enhances cell growth and inhibits apoptosis. Involved in the regulation of inflammatory response and neuroinflammation. Via the product sphingosine 1-phosphate, stimulates TRAF2 E3 ubiquitin ligase activity, and promotes activation of NF-kappa-B in response to TNF signaling leading to IL17 secretion. In response to TNF and in parallel to NF-kappa-B activation, negatively regulates RANTES induction through p38 MAPK signaling pathway. Involved in endocytic membrane trafficking induced by sphingosine, recruited to dilate endosomes, also plays a role on later stages of endosomal maturation and membrane fusion independently of its kinase activity. In Purkinje cells, seems to be also involved in the regulation of autophagosome-lysosome fusion upon VEGFA. Functionally, has serine acetyltransferase activity on PTGS2/COX2 in an acetyl-CoA dependent manner. The acetyltransferase activity increases in presence of the kinase substrate, sphingosine. During neuroinflammation, through PTGS2 acetylation, promotes neuronal secretion of specialized preresolving mediators (SPMs), especially 15-R-lipoxin A4, which results in an increase of phagocytic microglia. The protein is Sphingosine kinase 1 (Sphk1) of Rattus norvegicus (Rat).